The following is a 428-amino-acid chain: C4-dicarboxylate transport protein (428 aa).

The next 9 membrane-spanning stretches (helical) occupy residues 4–24 (SLFK…ILLG), 44–64 (LIKM…IAGM), 76–96 (VALL…LIIV), 142–162 (IGAF…LFGF), 184–204 (VIFG…FGAM), 222–242 (LIIC…GTIA), 289–309 (VVGL…SIYL), 326–346 (IFHQ…AAGV), and 352–372 (IVLA…LALI).

The protein belongs to the dicarboxylate/amino acid:cation symporter (DAACS) (TC 2.A.23) family.

It localises to the cell inner membrane. Its function is as follows. Responsible for the transport of dicarboxylates such as succinate, fumarate, and malate from the periplasm across the membrane. This chain is C4-dicarboxylate transport protein, found in Salmonella gallinarum (strain 287/91 / NCTC 13346).